The chain runs to 268 residues: Nickel import ATP-binding protein NikE (268 aa).

Residues 4 to 252 enclose the ABC transporter domain; that stretch reads LNVSGLSHHY…SSDAGRVLQN (249 aa). Position 45-52 (45-52) interacts with ATP; it reads GRSGCGKS.

It belongs to the ABC transporter superfamily. Nickel importer (TC 3.A.1.5.3) family. In terms of assembly, the complex is composed of two ATP-binding proteins (NikD and NikE), two transmembrane proteins (NikB and NikC) and a solute-binding protein (NikA).

It is found in the cell inner membrane. It catalyses the reaction Ni(2+)(out) + ATP + H2O = Ni(2+)(in) + ADP + phosphate + H(+). In terms of biological role, part of the ABC transporter complex NikABCDE involved in nickel import. Responsible for energy coupling to the transport system. The polypeptide is Nickel import ATP-binding protein NikE (Shigella sonnei (strain Ss046)).